A 23-amino-acid chain; its full sequence is NCPYCVVYCCPPAYCQASGCRPP.

Disulfide bonds link C2–C10, C5–C15, and C9–C20. 4-hydroxyproline; partial is present on P12.

It belongs to the conotoxin U superfamily. Expressed by the venom duct.

The protein resides in the secreted. The sequence is that of Conotoxin Tx6.5 from Conus textile (Cloth-of-gold cone).